The sequence spans 358 residues: Adenosine deaminase (358 aa).

Zn(2+)-binding residues include His14 and His16. Positions 16, 18, and 183 each coordinate substrate. His212 is a Zn(2+) binding site. Glu215 (proton donor) is an active-site residue. Residue Asp294 participates in Zn(2+) binding. Position 295 (Asp295) interacts with substrate.

This sequence belongs to the metallo-dependent hydrolases superfamily. Adenosine and AMP deaminases family. Requires Zn(2+) as cofactor.

Its subcellular location is the cell membrane. It localises to the cell junction. The protein resides in the cytoplasmic vesicle lumen. It is found in the cytoplasm. The protein localises to the lysosome. It carries out the reaction adenosine + H2O + H(+) = inosine + NH4(+). The catalysed reaction is 2'-deoxyadenosine + H2O + H(+) = 2'-deoxyinosine + NH4(+). Functionally, catalyzes the hydrolytic deamination of adenosine and 2-deoxyadenosine. Plays an important role in purine metabolism and in adenosine homeostasis. Modulates signaling by extracellular adenosine, and so contributes indirectly to cellular signaling events. May act as a positive regulator of T-cell coactivation. In Xenopus laevis (African clawed frog), this protein is Adenosine deaminase (ada).